A 626-amino-acid polypeptide reads, in one-letter code: MEFVAGEYDIVVVGAGHAGCEAALACARLGLKTIVFAINLDSIGNMPCNPSIGGTGKGHLVREIDALGGEMGKAADATAIQVRILNRAKGPAVYSLRAQCDRARYKLYMKRVLESQPNLDIRQGEVCDILVEDGKVTGVKLTTGAIFRAKAVVLATGTFLGGRIIIGETVYDGGPDGMHPAKYLTESLKKLGIEMMRFKTGTPARVHRRSLDFSKMQIQLGDEVITPFSFEHETLEIEQVPCYLTYTTEETHRIIRENLHRAPLFTGLIQGVGPRYCPSIEDKVVRFADKPRHQVFIEPMGRDTEEMYVQGMSSSLPEDVQIKMYRSVIGLENVQIMRPAYAIEYDCINPLQLEATLQFKKIKGLFSAGQINGTSGYEEAAAQGIIAGINAAMYVKGKEMLVLDRSQAYIGVLIDDLVTKGTNEPYRIMTSRAEYRLILRQDNADLRLTEIGYRIGLISQERYEKFLKKKKMIEDEIERLKKTVIAPSDKVNKFLIEHGSSPISTGVKLSELLKRPELSYEALREIDPQRPDLPRSVKEEVEIEIKYEGYIKKQLQQIEQFKKLENKKIPEWVDYNQISGLSTEAKQKLSQIRPASIGQASRISGVSPADISVLLIWLEQAKKGSK.

14–19 (GAGHAG) provides a ligand contact to FAD. 273 to 287 (GPRYCPSIEDKVVRF) is a binding site for NAD(+).

The protein belongs to the MnmG family. Homodimer. Heterotetramer of two MnmE and two MnmG subunits. Requires FAD as cofactor.

It localises to the cytoplasm. In terms of biological role, NAD-binding protein involved in the addition of a carboxymethylaminomethyl (cmnm) group at the wobble position (U34) of certain tRNAs, forming tRNA-cmnm(5)s(2)U34. The sequence is that of tRNA uridine 5-carboxymethylaminomethyl modification enzyme MnmG from Caldicellulosiruptor saccharolyticus (strain ATCC 43494 / DSM 8903 / Tp8T 6331).